Consider the following 79-residue polypeptide: Conotoxin PnMSGL-03 (79 aa).

Residues 1 to 20 (MSRLGIMVLTLLLLVFIVTS) form the signal peptide. Positions 21-44 (HQDAGEKQATQRDAINFRWRRSLI) are excised as a propeptide. Cystine bridges form between Cys-52-Cys-64, Cys-56-Cys-73, and Cys-63-Cys-77. Leu-78 carries the leucine amide modification.

Belongs to the conotoxin O3 superfamily. In terms of tissue distribution, expressed by the venom duct.

It is found in the secreted. The polypeptide is Conotoxin PnMSGL-03 (Conus pennaceus (Feathered cone)).